The following is a 166-amino-acid chain: Small ribosomal subunit protein uS5 (166 aa).

Positions 10–73 constitute an S5 DRBM domain; the sequence is QIEKLISLNR…TSARKNLRFV (64 aa).

It belongs to the universal ribosomal protein uS5 family. Part of the 30S ribosomal subunit. Contacts proteins S4 and S8.

With S4 and S12 plays an important role in translational accuracy. Its function is as follows. Located at the back of the 30S subunit body where it stabilizes the conformation of the head with respect to the body. The polypeptide is Small ribosomal subunit protein uS5 (Borrelia garinii subsp. bavariensis (strain ATCC BAA-2496 / DSM 23469 / PBi) (Borreliella bavariensis)).